Here is a 98-residue protein sequence, read N- to C-terminus: Large ribosomal subunit protein uL23 (98 aa).

It belongs to the universal ribosomal protein uL23 family. Part of the 50S ribosomal subunit. Contacts protein L29, and trigger factor when it is bound to the ribosome.

Its function is as follows. One of the early assembly proteins it binds 23S rRNA. One of the proteins that surrounds the polypeptide exit tunnel on the outside of the ribosome. Forms the main docking site for trigger factor binding to the ribosome. This Gluconacetobacter diazotrophicus (strain ATCC 49037 / DSM 5601 / CCUG 37298 / CIP 103539 / LMG 7603 / PAl5) protein is Large ribosomal subunit protein uL23.